The primary structure comprises 456 residues: tRNA-2-methylthio-N(6)-dimethylallyladenosine synthase (456 aa).

One can recognise an MTTase N-terminal domain in the interval 19–136 (LTFNVQTFGC…LAELIYARHT (118 aa)). 6 residues coordinate [4Fe-4S] cluster: Cys28, Cys63, Cys97, Cys173, Cys177, and Cys180. The Radical SAM core domain maps to 159 to 389 (QKYKFKAGVN…LTTIRESSSK (231 aa)). The 64-residue stretch at 392-455 (KDDEGKIAEV…GFYYMGEMME (64 aa)) folds into the TRAM domain.

Belongs to the methylthiotransferase family. MiaB subfamily. In terms of assembly, monomer. [4Fe-4S] cluster serves as cofactor.

The protein resides in the cytoplasm. It carries out the reaction N(6)-dimethylallyladenosine(37) in tRNA + (sulfur carrier)-SH + AH2 + 2 S-adenosyl-L-methionine = 2-methylsulfanyl-N(6)-dimethylallyladenosine(37) in tRNA + (sulfur carrier)-H + 5'-deoxyadenosine + L-methionine + A + S-adenosyl-L-homocysteine + 2 H(+). Catalyzes the methylthiolation of N6-(dimethylallyl)adenosine (i(6)A), leading to the formation of 2-methylthio-N6-(dimethylallyl)adenosine (ms(2)i(6)A) at position 37 in tRNAs that read codons beginning with uridine. This chain is tRNA-2-methylthio-N(6)-dimethylallyladenosine synthase, found in Lachnoclostridium phytofermentans (strain ATCC 700394 / DSM 18823 / ISDg) (Clostridium phytofermentans).